The sequence spans 723 residues: Catalase-peroxidase (723 aa).

The segment at residues 98–226 (WHSAGSYRVG…LAAVMMGLIY (129 aa)) is a cross-link (tryptophyl-tyrosyl-methioninium (Trp-Tyr) (with M-252)). The active-site Proton acceptor is the histidine 99. Positions 226–252 (YVNPEGVDGNPDPLKTAKDMRVTFARM) form a cross-link, tryptophyl-tyrosyl-methioninium (Tyr-Met) (with W-98). Position 267 (histidine 267) interacts with heme b.

This sequence belongs to the peroxidase family. Peroxidase/catalase subfamily. Homodimer or homotetramer. It depends on heme b as a cofactor. Formation of the three residue Trp-Tyr-Met cross-link is important for the catalase, but not the peroxidase activity of the enzyme.

The catalysed reaction is H2O2 + AH2 = A + 2 H2O. It catalyses the reaction 2 H2O2 = O2 + 2 H2O. Its function is as follows. Bifunctional enzyme with both catalase and broad-spectrum peroxidase activity. This chain is Catalase-peroxidase, found in Vibrio vulnificus (strain CMCP6).